The sequence spans 1476 residues: Copper-transporting ATPase 1 (1476 aa).

The Cytoplasmic segment spans residues 1–642 (MEPSMDVNSV…HKREIKQWRS (642 aa)). 2 HMA domains span residues 8 to 74 (NSVT…FDAL) and 85 to 151 (TDTL…LETG). T18, C19, and C22 together coordinate Cu(+). T152 is subject to Phosphothreonine. 2 HMA domains span residues 171-237 (VVLK…FPAF) and 276-342 (STAT…PGQY). The Cu(+) site is built by C182, C185, C287, and C290. A Phosphothreonine modification is found at T326. 4 positions are modified to phosphoserine: S338, S352, S356, and S361. 3 HMA domains span residues 376 to 442 (QETV…FDAV), 478 to 544 (SKCY…FGAT), and 554 to 620 (GILK…FEAS). Cu(+) contacts are provided by C387, C390, C489, C492, C565, and C568. Residues 643 to 665 (SFLVSLFFCTPVMGLMMYMMAME) form a helical membrane-spanning segment. 2 N-linked (GlcNAc...) asparagine glycosylation sites follow: N674 and N685. The next 3 membrane-spanning stretches (helical) occupy residues 695–717 (ILPGLSIMNLLSLLLCLPVQFFG), 736–760 (MDVLIVLATTIAFAYSLIILLVAMY), and 770–788 (SFDTPPMLFVFIALGRWLE). N887 is a glycosylation site (N-linked (GlcNAc...) asparagine). A helical membrane pass occupies residues 930–952 (YFVPFIVLVSIATLLVWIIIGFQ). N953 carries an N-linked (GlcNAc...) asparagine glycan. A helical membrane pass occupies residues 978–998 (AFQASITVLCIACPCSLGLAT). D1034 acts as the 4-aspartylphosphate intermediate in catalysis. 2 N-linked (GlcNAc...) asparagine glycosylation sites follow: N1130 and N1134. A run of 2 helical transmembrane segments spans residues 1347-1373 (INFLFPLIYNLVGIPIAAGVFLPIGLV) and 1379-1397 (GSAAMAASSVSVVLSSLFL). S1420 and S1422 each carry phosphoserine. Residue N1448 is glycosylated (N-linked (GlcNAc...) asparagine). 7 positions are modified to phosphoserine: S1450, S1453, S1456, S1459, S1463, S1466, and S1476.

The protein belongs to the cation transport ATPase (P-type) (TC 3.A.3) family. In terms of assembly, monomer. Interacts with PDZD11. Interacts with ATOX1 and COMMD1. Interacts with TYRP1. Directly interacts with SOD3; this interaction is copper-dependent and is required for SOD3 activity. Expressed in most tissues except liver.

It is found in the golgi apparatus. The protein resides in the trans-Golgi network membrane. Its subcellular location is the cell membrane. The enzyme catalyses Cu(+)(in) + ATP + H2O = Cu(+)(out) + ADP + phosphate + H(+). Its function is as follows. May function in the export of copper from the cytoplasm to an intracellular organelle. It may serve as well for the export of other metals. This Cricetulus griseus (Chinese hamster) protein is Copper-transporting ATPase 1 (ATP7A).